Consider the following 443-residue polypeptide: Tubulin epsilon and delta complex protein 2 (443 aa).

Positions 8-33 form a coiled coil; the sequence is RRLVAELRDALDSCAERQRQLEQSLR. Disordered stretches follow at residues 45 to 72 and 93 to 146; these read AETPAPEPTPGSEINKEAPSSACPPSPQ and GLSK…PWVP. Residues 106–124 are compositionally biased toward low complexity; that stretch reads LKSGSASTATKASAPPSTS.

In terms of assembly, interacts with TEDC1. Found in a complex with TEDC1, TEDC2, TUBE1 and TUBD1.

It localises to the cell projection. The protein resides in the cilium. The protein localises to the cytoplasm. It is found in the cytoskeleton. Its subcellular location is the microtubule organizing center. It localises to the centrosome. The protein resides in the centriole. In terms of biological role, acts as a positive regulator of ciliary hedgehog signaling. Required for centriole stability. This Bos taurus (Bovine) protein is Tubulin epsilon and delta complex protein 2.